The chain runs to 260 residues: Membrane protein insertase YidC 1 (260 aa).

Residues 1-22 (MLKSYRAVLVSLSLLFVFVLSG) form the signal peptide. A lipid anchor (N-palmitoyl cysteine) is attached at C23. A lipid anchor (S-diacylglycerol cysteine) is attached at C23. 5 helical membrane-spanning segments follow: residues 29–49 (IDAH…SFMI), 52–72 (VAHH…TLVI), 133–153 (LAGC…YYAI), 164–184 (FLWV…IAAL), and 213–233 (MPAM…LYWI).

This sequence belongs to the OXA1/ALB3/YidC family. Type 2 subfamily.

Its subcellular location is the cell membrane. Its function is as follows. Required for the insertion and/or proper folding and/or complex formation of integral membrane proteins into the membrane. Involved in integration of membrane proteins that insert both dependently and independently of the Sec translocase complex, as well as at least some lipoproteins. This is Membrane protein insertase YidC 1 from Bacillus cereus (strain ATCC 14579 / DSM 31 / CCUG 7414 / JCM 2152 / NBRC 15305 / NCIMB 9373 / NCTC 2599 / NRRL B-3711).